A 1363-amino-acid chain; its full sequence is Spike glycoprotein (1363 aa).

The N-terminal stretch at 1-13 (MFLILLISLPMAF) is a signal peptide. The Extracellular portion of the chain corresponds to 14 to 1307 (AVIGDLKCTT…GTYEYYVKWP (1294 aa)). One can recognise a BetaCoV S1-NTD domain in the interval 15–298 (VIGDLKCTTV…DFMSEIKCKT (284 aa)). Cystine bridges form between cysteine 21–cysteine 165, cysteine 160–cysteine 193, cysteine 172–cysteine 252, cysteine 286–cysteine 296, and cysteine 331–cysteine 356. N-linked (GlcNAc...) asparagine; by host glycans are attached at residues asparagine 59 and asparagine 133. An N-linked (GlcNAc...) asparagine; by host glycan is attached at asparagine 198. The region spanning 329-617 (PDCNIEAWLN…DVNSGTTCST (289 aa)) is the BetaCoV S1-CTD domain. N-linked (GlcNAc...) asparagine; by host glycosylation is present at asparagine 359. Intrachain disulfides connect cysteine 374–cysteine 427 and cysteine 386–cysteine 615. N-linked (GlcNAc...) asparagine; by host glycosylation is found at asparagine 437, asparagine 649, asparagine 676, asparagine 696, asparagine 714, asparagine 739, and asparagine 788. Fusion peptide regions lie at residues 914–935 (SAIE…VEAY) and 933–953 (EAYN…VQSY). Asparagine 937 is a glycosylation site (N-linked (GlcNAc...) asparagine; by host). Cysteine 938 and cysteine 949 are joined by a disulfide. Residues 1014-1064 (QKLIANAFNNALDAIQEGFDATNSALVKIQAVVNANAEALNNLLQQLSNRF) are heptad repeat 1. Positions 1043–1087 (QAVVNANAEALNNLLQQLSNRFGAISSSLQEILSRLDALEAQAQI) form a coiled coil. Residues asparagine 1194, asparagine 1224, asparagine 1234, asparagine 1253, asparagine 1267, and asparagine 1288 are each glycosylated (N-linked (GlcNAc...) asparagine; by host). Residues 1258–1296 (APDLSLDYINVTFLDLQDEMNRLQEAIKVLNQSYINLKD) are heptad repeat 2. A coiled-coil region spans residues 1269–1297 (TFLDLQDEMNRLQEAIKVLNQSYINLKDI). The chain crosses the membrane as a helical span at residues 1308–1328 (WYVWLLIGFAGVAMLVLLFFI). Residues 1329–1363 (CCCTGCGTSCFKICGGCCDDYTGHQELVIKTSHDD) are Cytoplasmic-facing. Residues 1359-1363 (TSHDD) carry the KxHxx motif.

This sequence belongs to the betacoronaviruses spike protein family. Homotrimer; each monomer consists of a S1 and a S2 subunit. The resulting peplomers protrude from the virus surface as spikes. Post-translationally, specific enzymatic cleavages in vivo yield mature proteins. The precursor is processed into S1 and S2 by host cell furin or another cellular protease to yield the mature S1 and S2 proteins. Additionally, a second cleavage leads to the release of a fusion peptide after viral attachment to host cell receptor. In terms of processing, the cytoplasmic Cys-rich domain is palmitoylated. Spike glycoprotein is digested within host endosomes.

Its subcellular location is the virion membrane. It is found in the host endoplasmic reticulum-Golgi intermediate compartment membrane. It localises to the host cell membrane. Attaches the virion to the cell membrane by interacting with host receptor, initiating the infection. In terms of biological role, mediates fusion of the virion and cellular membranes by acting as a class I viral fusion protein. Under the current model, the protein has at least three conformational states: pre-fusion native state, pre-hairpin intermediate state, and post-fusion hairpin state. During viral and target cell membrane fusion, the coiled coil regions (heptad repeats) assume a trimer-of-hairpins structure, positioning the fusion peptide in close proximity to the C-terminal region of the ectodomain. The formation of this structure appears to drive apposition and subsequent fusion of viral and target cell membranes. Functionally, acts as a viral fusion peptide which is unmasked following S2 cleavage occurring upon virus endocytosis. This chain is Spike glycoprotein, found in Bos taurus (Bovine).